We begin with the raw amino-acid sequence, 310 residues long: Glutamyl-Q tRNA(Asp) synthetase (310 aa).

L-glutamate contacts are provided by residues 24-28 and Glu-60; that span reads RFAPS. The 'HIGH' region motif lies at 27-37; the sequence is PSPSGPLHFGS. Zn(2+) is bound by residues Cys-116, Cys-118, Tyr-130, and Cys-134. L-glutamate is bound by residues Tyr-187 and Arg-205. Positions 243–247 match the 'KMSKS' region motif; it reads KLSKQ. An ATP-binding site is contributed by Lys-246.

Belongs to the class-I aminoacyl-tRNA synthetase family. GluQ subfamily. Zn(2+) serves as cofactor.

Catalyzes the tRNA-independent activation of glutamate in presence of ATP and the subsequent transfer of glutamate onto a tRNA(Asp). Glutamate is transferred on the 2-amino-5-(4,5-dihydroxy-2-cyclopenten-1-yl) moiety of the queuosine in the wobble position of the QUC anticodon. This chain is Glutamyl-Q tRNA(Asp) synthetase, found in Photobacterium profundum (strain SS9).